Here is a 159-residue protein sequence, read N- to C-terminus: Cytochrome c-type biogenesis protein CcmE (159 aa).

The Cytoplasmic segment spans residues 1-8 (MHPIRKKR). A helical; Signal-anchor for type II membrane protein membrane pass occupies residues 9-29 (LTIVLFLVAGIAIAVGLTTYA). The Periplasmic portion of the chain corresponds to 30 to 159 (LRQNINLFYD…VEKAAETTAY (130 aa)). Residues His124 and Tyr128 each contribute to the heme site. A disordered region spans residues 135-159 (EALERSSKGQHKSADVEKAAETTAY). Residues 136-159 (ALERSSKGQHKSADVEKAAETTAY) are compositionally biased toward basic and acidic residues.

The protein belongs to the CcmE/CycJ family.

The protein resides in the cell inner membrane. In terms of biological role, heme chaperone required for the biogenesis of c-type cytochromes. Transiently binds heme delivered by CcmC and transfers the heme to apo-cytochromes in a process facilitated by CcmF and CcmH. This is Cytochrome c-type biogenesis protein CcmE from Marinobacter nauticus (strain ATCC 700491 / DSM 11845 / VT8) (Marinobacter aquaeolei).